A 315-amino-acid polypeptide reads, in one-letter code: MPGLSCRFYQHKFPEVEDVVMVNVRSIAEMGAYVSLLEYNNIEGMILLSELSRRRIRSINKLIRIGRNECVVVIRVDKEKGYIDLSKRRVSPEEAIKCEDKFTKSKTVYSILRHVAEVLEYTKDEQLESLFQRTAWVFDDKYKRPGYGAYDAFKHAVSDPSILDSLDLNEDEREVLINNINRRLTPQAVKIRADIEVACYGYEGIDAVKEALRAGLNCSTENMPIKINLIAPPRYVMTTTTLERTEGLSVLSQAMAVIKEKIEEKRGVFNVQMEPKVVTDTDETELARQMERLERENAEVDGDDDAEEMEAKAED.

The region spanning 17–88 (EDVVMVNVRS…EKGYIDLSKR (72 aa)) is the S1 motif domain. A Phosphoserine; by HRI modification is found at serine 49. At serine 52 the chain carries Phosphoserine. Residue lysine 141 is modified to N6-acetyllysine. At serine 158 the chain carries Phosphoserine. Phosphothreonine occurs at positions 279 and 281. Residues 293–315 (LERENAEVDGDDDAEEMEAKAED) form a disordered region. Over residues 299-308 (EVDGDDDAEE) the composition is skewed to acidic residues.

It belongs to the eIF-2-alpha family. Eukaryotic translation initiation factor 2 eIF2 is a heterotrimeric complex composed of an alpha (EIF2S1), a beta (EIF2S2) and a gamma (EIF2S3) chain. eIF2 is member of the 43S pre-initiation complex (43S PIC). eIF2 forms a complex with at least CELF1/CUGBP1, CALR, CALR3, EIF2S1, EIF2S2, HSP90B1 and HSPA5. Interaction with METAP2 protects EIF2S1 from inhibitory phosphorylation. Interacts with ABCF1 isoform 2. Associates with ribosomes. Interacts with DDX3X in an RNA-independent manner. Interacts with CDC123. As to quaternary structure, (Microbial infection) Interacts with rotavirus A non-structural protein 2; this interaction probably plays a role in the sequestration of IF2A in viral factories. Interacts with rotavirus A non-structural protein 5; this interaction probably plays a role in its sequestration in viral factories. Phosphorylation at Ser-49 and Ser-52 stabilizes the eIF-2/GDP/eIF2B complex and prevents GDP/GTP exchange reaction, thus impairing the recycling of eIF-2 between successive rounds of initiation and leading to global inhibition of translation, while concomitantly initiating the preferential translation of integrated stress response (ISR)-specific mRNAs. Substrate for at least 4 kinases: EIF2AK1/HRI, EIF2AK2/PKR, EIF2AK3/PERK and EIF2AK4/GCN2. Phosphorylation on Ser-52 by the EIF2AK4/GCN2 protein kinase occurs in response to amino acid starvation and UV irradiation. Phosphorylation at Ser-52 by the EIF2AK3/PERK protein kinase occurs in response to the unfolded protein response. Phosphorylation at Ser-52 by EIF2AK1/HRI in response to mitochondrial damage promotes relocalization to the mitochondrial surface. In terms of processing, (Microbial infection) Phosphorylation by vaccinia virus protein E3 and rotavirus A stabilizes the eIF-2/GDP/eIF2B complex and prevents GDP/GTP exchange reaction, thus impairing the recycling of eIF-2 between successive rounds of initiation and leading to global inhibition of translation.

Its subcellular location is the cytoplasm. It is found in the stress granule. The protein localises to the cytosol. It localises to the mitochondrion. Its activity is regulated as follows. Activity is regulated by phosphorylation at Ser-49 and Ser-52, which stabilizes the eIF2/GDP/eIF2B complex and prevents the eIF2B-mediated exchange of GDP for GTP, thereby preventing the formation of the 43S pre-initiation complex (43S PIC). This results in the global attenuation of 5' cap-dependent protein synthesis and concomitant translation of ISR-specific mRNAs that contain a short upstream open reading frame (uORF) in their 5' UTR, such as ATF4, ATF5, DDIT3/CHOP and PPP1R15A/GADD34. Functionally, member of the eIF2 complex that functions in the early steps of protein synthesis by forming a ternary complex with GTP and initiator tRNA. This complex binds to a 40S ribosomal subunit, followed by mRNA binding to form a 43S pre-initiation complex (43S PIC). Junction of the 60S ribosomal subunit to form the 80S initiation complex is preceded by hydrolysis of the GTP bound to eIF2 and release of an eIF2-GDP binary complex. In order for eIF2 to recycle and catalyze another round of initiation, the GDP bound to eIF2 must exchange with GTP by way of a reaction catalyzed by eIF2B. EIF2S1/eIF2-alpha is a key component of the integrated stress response (ISR), required for adaptation to various stress: phosphorylation by metabolic-stress sensing protein kinases (EIF2AK1/HRI, EIF2AK2/PKR, EIF2AK3/PERK and EIF2AK4/GCN2) in response to stress converts EIF2S1/eIF2-alpha in a global protein synthesis inhibitor, leading to an attenuation of cap-dependent translation, while concomitantly initiating the preferential translation of ISR-specific mRNAs, such as the transcriptional activators ATF4 and QRICH1, and hence allowing ATF4- and QRICH1-mediated reprogramming. EIF2S1/eIF2-alpha also acts as an activator of mitophagy in response to mitochondrial damage: phosphorylation by EIF2AK1/HRI promotes relocalization to the mitochondrial surface, thereby triggering PRKN-independent mitophagy. The protein is Eukaryotic translation initiation factor 2 subunit 1 of Homo sapiens (Human).